The following is a 351-amino-acid chain: Leukotriene B4 receptor 1 (351 aa).

At 1–21 (MAANTTSTAATSSPGGMSLSL) the chain is on the extracellular side. An N-linked (GlcNAc...) asparagine glycan is attached at asparagine 4. A helical membrane pass occupies residues 22–44 (LPIVLLSVALVVGLPGNSFVVWS). Residues 45–56 (ILKRMQKRSVTA) are Cytoplasmic-facing. Residues 57-77 (LLVLNLALADLAVLLTAPFFL) form a helical membrane-spanning segment. Over 78 to 93 (HFLARGTWSFEVTGCR) the chain is Extracellular. Residues 94 to 115 (LCHYVCGVSMYASVLLITIMSL) form a helical membrane-spanning segment. Over 116–140 (DRSLAVARPFVSQKVRTKAFARWVL) the chain is Cytoplasmic. A helical membrane pass occupies residues 141-161 (AGIWVVSFLLAIPVLVYRTVT). Over 162–179 (PKNKTLICDSRYPSDGHK) the chain is Extracellular. Residue asparagine 164 is glycosylated (N-linked (GlcNAc...) asparagine). The helical transmembrane segment at 180–200 (VFHLLFEAITGFLLPFLAVVA) threads the bilayer. Residues 201–222 (SYSDIGRRLQARRFRRSRRTGR) are Cytoplasmic-facing. The helical transmembrane segment at 223-243 (LVVLIILAFAAFWLPYHLVNL) threads the bilayer. At 244-268 (VEAGRTLAGWDKNSPAGQRLKLARY) the chain is on the extracellular side. The helical transmembrane segment at 269 to 289 (VLIALAFLSSSVNPVLYACAG) threads the bilayer. Residues 290–351 (GGLLRSAGVG…TSSTPPESSK (62 aa)) are Cytoplasmic-facing. Composition is skewed to polar residues over residues 311-327 (EVSS…TPKA) and 339-351 (SFMT…ESSK). The interval 311–351 (EVSSTRRGGTLVQTPKATPTCPEPGPTDSFMTSSTPPESSK) is disordered.

This sequence belongs to the G-protein coupled receptor 1 family. Post-translationally, phosphorylated by GRK6 upon leukotriene B4 binding; which promotes desensitization. As to expression, exclusively expressed in polymorphonuclear leukocytes.

Its subcellular location is the cell membrane. In terms of biological role, receptor for leukotriene B4, a potent chemoattractant involved in inflammation and immune response. This is Leukotriene B4 receptor 1 (Ltb4r) from Rattus norvegicus (Rat).